We begin with the raw amino-acid sequence, 263 residues long: (E)-2-((N-methylformamido)methylene)succinate hydrolase (263 aa).

The active-site Nucleophile is Ser-96. Active-site residues include Asn-120 and His-241.

It belongs to the AB hydrolase superfamily. As to quaternary structure, monomer.

It carries out the reaction (E)-2-((N-methylformamido) methylene)succinate + 2 H2O + H(+) = succinate semialdehyde + methylamine + formate + CO2. Functionally, involved in the degradation of the pyridine ring of trigonelline (TG; N-methylnicotinate) into succinate and methylamine as carbon and nitrogen sources, respectively. Catalyzes the hydrolysis of (E)-2-((N-methylformamido)methylene)succinate (MFMS) into formic acid, succinate semialdehyde (SSA), methylamine and carbon dioxide. The protein is (E)-2-((N-methylformamido)methylene)succinate hydrolase of Acinetobacter baylyi (strain ATCC 33305 / BD413 / ADP1).